Consider the following 41-residue polypeptide: Peptide Hact-SCRiP1 (41 aa).

Disulfide bonds link Cys5-Cys37, Cys12-Cys31, Cys19-Cys38, and Cys26-Cys39.

As to expression, expressed in tentacles.

The protein localises to the nematocyst. It is found in the secreted. Peptide with unknown function. Does not exhibit any effect on human ion channel TRPV1 in a Xenopus laevis oocytes assay. This is Peptide Hact-SCRiP1 from Heliofungia actiniformis (Mushroom coral).